We begin with the raw amino-acid sequence, 525 residues long: Peptide chain release factor 3 (525 aa).

A tr-type G domain is found at 9 to 276 (AKRRTFAIIS…GFTTYAPEPQ (268 aa)). Residues 18–25 (SHPDAGKT), 86–90 (DTPGH), and 140–143 (NKFD) contribute to the GTP site.

The protein belongs to the TRAFAC class translation factor GTPase superfamily. Classic translation factor GTPase family. PrfC subfamily.

The protein resides in the cytoplasm. Increases the formation of ribosomal termination complexes and stimulates activities of RF-1 and RF-2. It binds guanine nucleotides and has strong preference for UGA stop codons. It may interact directly with the ribosome. The stimulation of RF-1 and RF-2 is significantly reduced by GTP and GDP, but not by GMP. This chain is Peptide chain release factor 3, found in Francisella philomiragia subsp. philomiragia (strain ATCC 25017 / CCUG 19701 / FSC 153 / O#319-036).